The chain runs to 336 residues: Protein ABHD13 (336 aa).

Residues 37-57 traverse the membrane as a helical; Signal-anchor for type II membrane protein segment; the sequence is FNMYGGVILLLLIFVSIAGIL. Catalysis depends on charge relay system residues Ser-193, Asp-268, and His-298. Asn-299 carries N-linked (GlcNAc...) asparagine glycosylation.

The protein belongs to the serine esterase family.

Its subcellular location is the membrane. The sequence is that of Protein ABHD13 from Xenopus laevis (African clawed frog).